A 301-amino-acid chain; its full sequence is Protoheme IX farnesyltransferase (301 aa).

Transmembrane regions (helical) follow at residues Val-25–Val-45, Trp-47–Ile-67, Ile-97–Asn-117, Leu-119–Leu-139, Ile-147–Gly-167, Ala-173–Leu-193, Phe-235–Phe-255, and Ile-279–Ile-299.

This sequence belongs to the UbiA prenyltransferase family. Protoheme IX farnesyltransferase subfamily.

The protein localises to the cell inner membrane. The enzyme catalyses heme b + (2E,6E)-farnesyl diphosphate + H2O = Fe(II)-heme o + diphosphate. It participates in porphyrin-containing compound metabolism; heme O biosynthesis; heme O from protoheme: step 1/1. In terms of biological role, converts heme B (protoheme IX) to heme O by substitution of the vinyl group on carbon 2 of heme B porphyrin ring with a hydroxyethyl farnesyl side group. The chain is Protoheme IX farnesyltransferase from Paraburkholderia xenovorans (strain LB400).